Consider the following 466-residue polypeptide: Asparagine--tRNA ligase (466 aa).

This sequence belongs to the class-II aminoacyl-tRNA synthetase family. In terms of assembly, homodimer.

It is found in the cytoplasm. The catalysed reaction is tRNA(Asn) + L-asparagine + ATP = L-asparaginyl-tRNA(Asn) + AMP + diphosphate + H(+). In Shewanella amazonensis (strain ATCC BAA-1098 / SB2B), this protein is Asparagine--tRNA ligase.